The sequence spans 115 residues: Ribonuclease P protein component (115 aa).

Belongs to the RnpA family. As to quaternary structure, consists of a catalytic RNA component (M1 or rnpB) and a protein subunit.

The enzyme catalyses Endonucleolytic cleavage of RNA, removing 5'-extranucleotides from tRNA precursor.. Its function is as follows. RNaseP catalyzes the removal of the 5'-leader sequence from pre-tRNA to produce the mature 5'-terminus. It can also cleave other RNA substrates such as 4.5S RNA. The protein component plays an auxiliary but essential role in vivo by binding to the 5'-leader sequence and broadening the substrate specificity of the ribozyme. The chain is Ribonuclease P protein component from Bacillus cereus (strain AH187).